The following is a 77-amino-acid chain: MENFDKVKDIIVDRLGVDADKVTEDASFKDDLGADSLDIAELVMELEDEFGTEIPDEEAEKINTVGDAVNFINNLEK.

The Carrier domain maps to 1–76 (MENFDKVKDI…DAVNFINNLE (76 aa)). Serine 36 is modified (O-(pantetheine 4'-phosphoryl)serine).

The protein belongs to the acyl carrier protein (ACP) family. In terms of processing, 4'-phosphopantetheine is transferred from CoA to a specific serine of apo-ACP by AcpS. This modification is essential for activity because fatty acids are bound in thioester linkage to the sulfhydryl of the prosthetic group.

The protein localises to the cytoplasm. The protein operates within lipid metabolism; fatty acid biosynthesis. Functionally, carrier of the growing fatty acid chain in fatty acid biosynthesis. The chain is Acyl carrier protein from Staphylococcus carnosus (strain TM300).